A 166-amino-acid polypeptide reads, in one-letter code: UPF0254 protein Mevan_0254 (166 aa).

Belongs to the UPF0254 family.

The protein is UPF0254 protein Mevan_0254 of Methanococcus vannielii (strain ATCC 35089 / DSM 1224 / JCM 13029 / OCM 148 / SB).